Consider the following 83-residue polypeptide: Apolipoprotein C-I, basic form (83 aa).

The signal sequence occupies residues 1–26 (MRLFLSLPVLVVVLSMVLEGPAPVQG).

Belongs to the apolipoprotein C1 family.

It is found in the secreted. Its function is as follows. Inhibitor of lipoprotein binding to the low density lipoprotein (LDL) receptor, LDL receptor-related protein, and very low density lipoprotein (VLDL) receptor. Associates with high density lipoproteins (HDL) and the triacylglycerol-rich lipoproteins in the plasma and makes up about 10% of the protein of the VLDL and 2% of that of HDL. Appears to interfere directly with fatty acid uptake and is also the major plasma inhibitor of cholesteryl ester transfer protein (CETP). Binds free fatty acids and reduces their intracellular esterification. Modulates the interaction of APOE with beta-migrating VLDL and inhibits binding of beta-VLDL to the LDL receptor-related protein. This chain is Apolipoprotein C-I, basic form (APOC1), found in Papio anubis (Olive baboon).